Here is a 525-residue protein sequence, read N- to C-terminus: GMP synthase [glutamine-hydrolyzing] (525 aa).

The Glutamine amidotransferase type-1 domain occupies 9–207 (RILILDFGSQ…VRDICQCEAL (199 aa)). The active-site Nucleophile is the cysteine 86. Residues histidine 181 and glutamate 183 contribute to the active site. The 193-residue stretch at 208–400 (WTPAKIIDDA…LGLPYDMLYR (193 aa)) folds into the GMPS ATP-PPase domain. 235 to 241 (SGGVDSS) provides a ligand contact to ATP.

In terms of assembly, homodimer.

The catalysed reaction is XMP + L-glutamine + ATP + H2O = GMP + L-glutamate + AMP + diphosphate + 2 H(+). It functions in the pathway purine metabolism; GMP biosynthesis; GMP from XMP (L-Gln route): step 1/1. Its function is as follows. Catalyzes the synthesis of GMP from XMP. In Salmonella typhimurium (strain LT2 / SGSC1412 / ATCC 700720), this protein is GMP synthase [glutamine-hydrolyzing].